A 279-amino-acid polypeptide reads, in one-letter code: Thymidylate synthase (279 aa).

Residue 133–134 (RR) coordinates dUMP. Cys-154 acts as the Nucleophile in catalysis. Residues 178-181 (RSND), Asn-189, and 219-221 (HIY) contribute to the dUMP site. Asp-181 contributes to the (6R)-5,10-methylene-5,6,7,8-tetrahydrofolate binding site. Position 278 (Ala-278) interacts with (6R)-5,10-methylene-5,6,7,8-tetrahydrofolate.

Belongs to the thymidylate synthase family. Bacterial-type ThyA subfamily. In terms of assembly, homodimer.

The protein resides in the cytoplasm. The enzyme catalyses dUMP + (6R)-5,10-methylene-5,6,7,8-tetrahydrofolate = 7,8-dihydrofolate + dTMP. It functions in the pathway pyrimidine metabolism; dTTP biosynthesis. Functionally, catalyzes the reductive methylation of 2'-deoxyuridine-5'-monophosphate (dUMP) to 2'-deoxythymidine-5'-monophosphate (dTMP) while utilizing 5,10-methylenetetrahydrofolate (mTHF) as the methyl donor and reductant in the reaction, yielding dihydrofolate (DHF) as a by-product. This enzymatic reaction provides an intracellular de novo source of dTMP, an essential precursor for DNA biosynthesis. In Streptococcus pyogenes serotype M12 (strain MGAS2096), this protein is Thymidylate synthase.